The chain runs to 359 residues: Phosphate acyltransferase (359 aa).

The tract at residues 335-359 (SGAGGAATGSPETDAPNPHPDSRAA) is disordered.

The protein belongs to the PlsX family. As to quaternary structure, homodimer. Probably interacts with PlsY.

The protein localises to the cytoplasm. It carries out the reaction a fatty acyl-[ACP] + phosphate = an acyl phosphate + holo-[ACP]. Its pathway is lipid metabolism; phospholipid metabolism. Its function is as follows. Catalyzes the reversible formation of acyl-phosphate (acyl-PO(4)) from acyl-[acyl-carrier-protein] (acyl-ACP). This enzyme utilizes acyl-ACP as fatty acyl donor, but not acyl-CoA. This Cupriavidus metallidurans (strain ATCC 43123 / DSM 2839 / NBRC 102507 / CH34) (Ralstonia metallidurans) protein is Phosphate acyltransferase.